The following is a 127-amino-acid chain: Snaclec bothroinsularin subunit beta (127 aa).

3 disulfides stabilise this stretch: C2-C13, C30-C123, and C100-C115. One can recognise a C-type lectin domain in the interval 9–124 (YEGSCYRVFE…CTKLEYFVCE (116 aa)).

Belongs to the snaclec family. Heterodimer of subunits alpha and beta; disulfide-linked. As to expression, expressed by the venom gland.

The protein resides in the secreted. In terms of biological role, thrombin and prothrombin (F2) inhibitor. The IC(50) of thrombin-induced platelet aggregation and fibrinocoagulation is 62 and 35 nM, respectively. Its inhibitory activity is at least 10-fold lower than that observed for other thrombin inhibitors. This is Snaclec bothroinsularin subunit beta from Bothrops insularis (Golden lancehead).